Reading from the N-terminus, the 172-residue chain is AIG2-like protein B (172 aa).

15–20 (YGSFQE) contacts substrate. E83 acts as the Proton acceptor in catalysis. Residues 146–165 (KRNPQGKGRDDFSNVLKEED) are compositionally biased toward basic and acidic residues. The interval 146–172 (KRNPQGKGRDDFSNVLKEEDPANAPSS) is disordered.

The protein belongs to the gamma-glutamylcyclotransferase family. In terms of tissue distribution, expressed in flowerss, leaves, stems, seeds and roots.

The protein localises to the cell membrane. Putative gamma-glutamylcyclotransferase. This Arabidopsis thaliana (Mouse-ear cress) protein is AIG2-like protein B.